The sequence spans 337 residues: N-acetyl-gamma-glutamyl-phosphate reductase (337 aa).

Cysteine 149 is an active-site residue.

Belongs to the NAGSA dehydrogenase family. Type 1 subfamily.

It is found in the cytoplasm. It catalyses the reaction N-acetyl-L-glutamate 5-semialdehyde + phosphate + NADP(+) = N-acetyl-L-glutamyl 5-phosphate + NADPH + H(+). Its pathway is amino-acid biosynthesis; L-arginine biosynthesis; N(2)-acetyl-L-ornithine from L-glutamate: step 3/4. Catalyzes the NADPH-dependent reduction of N-acetyl-5-glutamyl phosphate to yield N-acetyl-L-glutamate 5-semialdehyde. The polypeptide is N-acetyl-gamma-glutamyl-phosphate reductase (Wolinella succinogenes (strain ATCC 29543 / DSM 1740 / CCUG 13145 / JCM 31913 / LMG 7466 / NCTC 11488 / FDC 602W) (Vibrio succinogenes)).